A 506-amino-acid polypeptide reads, in one-letter code: Nondiscriminating glutamyl-tRNA synthetase EARS2, mitochondrial (506 aa).

The transit peptide at 1–41 directs the protein to the mitochondrion; sequence MAALLRRLLQRGRPLAASGRRVGRREARLGTGPGVAVRVRF. Residue 40–42 participates in L-glutamate binding; the sequence is RFA. Residues 45–53 carry the 'HIGH' region motif; sequence PTGFLHLGG. His50 is a binding site for ATP. L-glutamate contacts are provided by residues Glu76, 228-232, and Arg246; that span reads YHLAC. Glu249 is a binding site for ATP. Lys256 carries the post-translational modification N6-succinyllysine. Residue 284-288 participates in ATP binding; the sequence is KLSKR. The 'KMSKS' region motif lies at 284–288; that stretch reads KLSKR. Position 486 is an N6-acetyllysine (Lys486).

Belongs to the class-I aminoacyl-tRNA synthetase family. Glutamate--tRNA ligase type 1 subfamily.

The protein localises to the mitochondrion matrix. It catalyses the reaction tRNA(Glx) + L-glutamate + ATP = L-glutamyl-tRNA(Glx) + AMP + diphosphate. The enzyme catalyses tRNA(Glu) + L-glutamate + ATP = L-glutamyl-tRNA(Glu) + AMP + diphosphate. The catalysed reaction is tRNA(Gln) + L-glutamate + ATP = L-glutamyl-tRNA(Gln) + AMP + diphosphate. Non-discriminating glutamyl-tRNA synthetase that catalyzes aminoacylation of both mitochondrial tRNA(Glu) and tRNA(Gln) and participates in RNA aminoacylation for mitochondrial protein translation. Attachs glutamate to tRNA(Glu) or tRNA(Gln) in a two-step reaction: glutamate is first activated by ATP to form Glu-AMP and then transferred to the acceptor end of tRNA(Glu) or tRNA(Gln). In vitro, cytoplasmic tRNA(Gln) is slightly glutamylated, but with low activity. The chain is Nondiscriminating glutamyl-tRNA synthetase EARS2, mitochondrial from Macaca fascicularis (Crab-eating macaque).